The following is a 262-amino-acid chain: Thrombin-like enzyme calobin-1 (262 aa).

A signal peptide spans 1–18 (MVLISVLANLLILQLSYA). Positions 19–24 (QKSSEL) are excised as a propeptide. The Peptidase S1 domain maps to 25–253 (VIGGDECNIN…HLDWIQSIIA (229 aa)). Intrachain disulfides connect cysteine 31-cysteine 165, cysteine 52-cysteine 68, cysteine 100-cysteine 260, cysteine 144-cysteine 214, cysteine 176-cysteine 193, and cysteine 204-cysteine 229. Histidine 67 (charge relay system) is an active-site residue. N-linked (GlcNAc...) asparagine glycosylation is present at asparagine 105. Aspartate 112 functions as the Charge relay system in the catalytic mechanism. Residue serine 208 is the Charge relay system of the active site.

Belongs to the peptidase S1 family. Snake venom subfamily. Monomer. Post-translationally, N-glycosylated. As to expression, expressed by the venom gland.

It is found in the secreted. Strongly inhibited by PMSF, and moderately by benzamidine and soybean trypsin inhibitor. Thrombin-like snake venom serine protease. Has a coagulant activity. Acts on alpha-chains of fibrinogen (FGA) generating fibrinopeptide A. The protein is Thrombin-like enzyme calobin-1 of Gloydius ussuriensis (Ussuri mamushi).